The sequence spans 122 residues: Vacuolar transporter chaperone complex subunit 1 (122 aa).

Residues 1–32 lie on the Cytoplasmic side of the membrane; the sequence is MSTQPLLQTTPGKRIALPVRVEPKVFFANERT. A helical membrane pass occupies residues 33–53; the sequence is FLSWLSFAVVLGGLSVGLLNF. Over 54–59 the chain is Vacuolar; sequence GDRIGK. Residues 60-80 traverse the membrane as a helical segment; sequence ISAGLFTIVAIGTMGYALGIY. Residues 81 to 101 are Cytoplasmic-facing; the sequence is HWRASAIRRRGSGPYDDRLGP. The chain crosses the membrane as a helical span at residues 102–122; sequence TILCFVLLAAIITNFVLRMLF.

It belongs to the VTC1 family. The VTC core complex is an integral membrane heterooligomer composed of at least the catalytic subunit vtc4 and the accessory subunits vtc1 and vtc2. vtc1 is a small membrane protein without hydrophilic domain. Vtc2 and vtc4 are related and have 2 hydrophilic domains that face the cytosol, an N-terminal SPX domain and the central core domain. The central core in vtc4 is the catalytic domain. Vtc1 interacts with GTP-bound Ras-like cdc42, which is subsequently inactivated.

The protein resides in the vacuole membrane. Its function is as follows. Accessory subunit of the vacuolar transporter chaperone (VTC) complex. The VTC complex acts as a vacuolar polyphosphate polymerase that catalyzes the synthesis of inorganic polyphosphate (polyP) via transfer of phosphate from ATP to a growing polyP chain, releasing ADP. VTC exposes its catalytic domain vtc4 to the cytosol, where the growing polyP chain winds through a tunnel-shaped pocket, integrating cytoplasmic polymer synthesis with polyP membrane translocation. The VTC complex carries 9 vacuolar transmembrane domains, which are likely to constitute the translocation channel into the organelle lumen. PolyP synthesis is tightly coupled to its transport into the vacuole lumen, in order to avoid otherwise toxic intermediates in the cytosol, and it depends on the proton gradient across the membrane, formed by V-ATPase. Vtc1 contributes only 3 transmembrane domains to the complex. The VTC complex also plays a role in vacuolar membrane fusion. Involved in the control of cell polarity. This is Vacuolar transporter chaperone complex subunit 1 from Schizosaccharomyces pombe (strain 972 / ATCC 24843) (Fission yeast).